The following is a 384-amino-acid chain: Terpene cyclase ascI (384 aa).

A signal peptide spans 1–25 (MPQLAGKLILAGLIPLGAWVLHGFA). Residues 82–102 (LSLHAFMFAGQGVPLLVLNML) form a helical membrane-spanning segment. A glycan (N-linked (GlcNAc...) asparagine) is linked at Asn109. Transmembrane regions (helical) follow at residues 119–139 (VFGILYMVVGLAIMAPLYLFL), 164–184 (AVGFGVFVGYVLPTIFMSLPH), 194–214 (VLSVVFWQAVPLWASVCAYFA), and 235–255 (GAVYAASLIIATATHVATFAI). N-linked (GlcNAc...) asparagine glycosylation is present at Asn258. Transmembrane regions (helical) follow at residues 291 to 311 (WFLQWDYTMMSLAYMVWAIGI) and 330 to 350 (IALRSMAKLLVMGPIGAALSL). Asn372 is a glycosylation site (N-linked (GlcNAc...) asparagine).

Belongs to the membrane-bound ascI terpene cyclase family.

Its subcellular location is the membrane. It carries out the reaction 16-hydroxy-ilicicolin A epoxide = ascofuranol. Its pathway is secondary metabolite biosynthesis; terpenoid biosynthesis. In terms of biological role, epoxide hydrolase; part of the asc-2 gene cluster that mediates the biosynthesis of ascofuranone, a strong inhibitor of cyanide-insensitive alternative oxidases and a promising drug candidate against African trypanosomiasis. The first step in the pathway is performed by the non-reducing polyketide synthase ascC that produces orsellinic acid by condensing acetyl-CoA with 3 malonyl-CoA units. Orsellinic acid is then prenylated by the prenyltransferase ascA to yield ilicicolinic acid B. Ilicicolinic acid B is further reduced to ilicicolin B by the reductase ascB. The halogenase ascD then chlorinates ilicicolin B to produce ilicicolin A which is converted to ilicicolin A epoxide by the cytochrome P450 monooxygenase ascE that catalyzes stereoselective epoxidation of the terminal double bond of the prenyl group. Ilicicolin A epoxide is the last common precursor for the biosynthesis of ascofuranone and ascochlorin. The terpene cyclase ascF produces a monocyclic terpene, and the cyclization reaction is proposed to be initiated by protonation of the terminal epoxide of ilicicolin A epoxide to generate a monocyclic tertiarycation, which is followed by a series of hydride and methyl shifts with abstraction of proton, leading to the formation of the (14S,15R,19R)-trimethylcyclohexanone ring structure of ilicicolin C, which is finally reduced to ascochlorin by the dehydrogenase ascG. On the other hand, ilicicolin A epoxide is hydroxylated by the cytochrome P450 monooxygenase ascH, and the resultant product is cyclized by the terpene cyclase ascI to ascofuranol via protonation-initiated epoxide ring opening, which facilitates the 6-endo-tet cyclization to form the tetrahy-drofuran ring. Finally, ascofuranol is oxidized into ascofuranone by ascJ. The polypeptide is Terpene cyclase ascI (Acremonium egyptiacum (Oospora egyptiaca)).